A 450-amino-acid polypeptide reads, in one-letter code: MEQAAPDPERLWQPAPLEPLSHPDAGLESMVGEETKGARDEGPGDGTMTENNFSLKKIEISVSEAEKRTGRNAMNMQETYTAYLIETRSVEHNDGQSVLTDSLWRRYSEFELLRNYLLVYYPHIVVPPLPEKRAEFVWHKLSADNMDPDFVERRRIGLENFLLRVASHPILCRDKIFYLFLTQEGNWKETVNETGFQLKADSRLKALNATFRVKNPDKRFIELKHYSDELQSVISHLLRVRARVADRLYGVYKVHGNYGRVFSEWSAIEKEMGDGLQSAGHHMDVYASSIDDILEDEEHYADQLKEYLFYAEALRAVCRKHELMQYDLEMAAQDLASKKQQCEELATGTVRTFSLKGMTTKLFGQETPEQREARIKMLEEQIKEGEQQLKSKNLEGREFVRNAWADIERFKEQKNHDLKEALISYAVMQISMCKKGIQVWTNAKECFSKM.

N-acetylmethionine is present on methionine 1. A disordered region spans residues 1 to 53 (MEQAAPDPERLWQPAPLEPLSHPDAGLESMVGEETKGARDEGPGDGTMTENNF). Basic and acidic residues predominate over residues 33 to 42 (EETKGARDEG). Positions 61–187 (SVSEAEKRTG…YLFLTQEGNW (127 aa)) constitute a PX domain. A 1,2-diacyl-sn-glycero-3-phospho-(1D-myo-inositol-3-phosphate) is bound by residues arginine 106, serine 108, lysine 132, and arginine 154.

The protein belongs to the sorting nexin family. Heterodimer; heterodimerizes with SNX7 or SNX30. Interacts with WWC1/KIBRA. Identified in a complex with WWC1/KIBRA and dynein components DYNLL1 and DYNC1I2. Interacts with BIN1.

Its subcellular location is the early endosome. It is found in the early endosome membrane. Involved in the regulation of endocytosis and in several stages of intracellular trafficking. Plays a role in recycling endocytosed transferrin receptor and prevent its degradation. Involved in autophagosome assembly by regulating trafficking and recycling of phospholipid scramblase ATG9A. The protein is Sorting nexin-4 of Bos taurus (Bovine).